The primary structure comprises 103 residues: Protein reprimo A (103 aa).

A helical membrane pass occupies residues 50 to 70; it reads IVQIAVMCVLSLTVVFGIFFL.

Belongs to the reprimo family.

It localises to the cytoplasm. The protein localises to the membrane. In terms of biological role, may be involved in the regulation of p53-dependent G2 arrest of the cell cycle. The protein is Protein reprimo A of Danio rerio (Zebrafish).